The sequence spans 527 residues: Putative ribose/galactose/methyl galactoside import ATP-binding protein 2 (527 aa).

The tract at residues 1-31 (MFTARVARPMAGDDAPAASSGSTGSSAPPAS) is disordered. Low complexity predominate over residues 12 to 31 (GDDAPAASSGSTGSSAPPAS). ABC transporter domains lie at 38–274 (LEVR…VGRE) and 284–523 (VPIG…RIMD). Residue 70–77 (GENGAGKS) coordinates ATP.

It belongs to the ABC transporter superfamily. Carbohydrate importer 2 (CUT2) (TC 3.A.1.2) family.

The protein resides in the cell inner membrane. It carries out the reaction D-ribose(out) + ATP + H2O = D-ribose(in) + ADP + phosphate + H(+). It catalyses the reaction D-galactose(out) + ATP + H2O = D-galactose(in) + ADP + phosphate + H(+). Its function is as follows. Part of an ABC transporter complex involved in carbohydrate import. Could be involved in ribose, galactose and/or methyl galactoside import. Responsible for energy coupling to the transport system. This chain is Putative ribose/galactose/methyl galactoside import ATP-binding protein 2, found in Burkholderia lata (strain ATCC 17760 / DSM 23089 / LMG 22485 / NCIMB 9086 / R18194 / 383).